A 402-amino-acid polypeptide reads, in one-letter code: Shaggy-related protein kinase GSK2 (402 aa).

The segment at 1–38 (MDQPAPAPEPMLLDAQPPAAVACDKKQQEGEAPYAEGN) is disordered. In terms of domain architecture, Protein kinase spans 63–347 (YMAERVVGTG…ALDACAHPFF (285 aa)). ATP is bound by residues 69–77 (VGTGSFGIV) and Lys92. Asp188 functions as the Proton acceptor in the catalytic mechanism.

This sequence belongs to the protein kinase superfamily. CMGC Ser/Thr protein kinase family. GSK-3 subfamily. Interacts with DLT. Interacts with OFP8. Interacts with GRF4. Interacts with PUB24. Interacts with SMOS1. In terms of processing, autophosphorylated. Expressed in lamina joints, vascular tissue and nodes.

It is found in the cytoplasm. The protein resides in the nucleus. It carries out the reaction L-seryl-[protein] + ATP = O-phospho-L-seryl-[protein] + ADP + H(+). The enzyme catalyses L-threonyl-[protein] + ATP = O-phospho-L-threonyl-[protein] + ADP + H(+). Serine-threonine kinase that acts as a negative regulator of brassinosteroid (BR) signaling. Phosphorylates DLT and BZR1, two positive regulators that mediates several BR responses. Phosphorylation of DLT and BZR1 inhibits their activities in BR signaling. Phosphorylates OFP8, a positive regulator of BR responses. Phosphorylated OFP8 shuttles from the nucleus to the cytoplasm where it is degraded by the proteasome. Phosphorylates the E3 ubiquitin-protein ligase PUB24, a negative regulator of BR signaling, which targets BZR1 and promotes its degradation via the 26S proteasome. Phosphorylation of PUB24 increases its stability. Phosphorylates the AP2-ERF transcription factor SMOS1, a positive regulator of BR signaling, which cooperatively functions in a transactivating complex with BZR1 to enhance the transcription of BR biosynthetic genes. Phosphorylation of SMOS1 leads to its degradation by an unknown mechanism. In Oryza sativa subsp. japonica (Rice), this protein is Shaggy-related protein kinase GSK2.